The following is a 247-amino-acid chain: Carboxy-S-adenosyl-L-methionine synthase (247 aa).

Residues Tyr40, 65–67 (GSS), 90–91 (DN), 122–123 (DI), Asn137, and Arg204 each bind S-adenosyl-L-methionine.

It belongs to the class I-like SAM-binding methyltransferase superfamily. Cx-SAM synthase family. As to quaternary structure, homodimer.

It carries out the reaction prephenate + S-adenosyl-L-methionine = carboxy-S-adenosyl-L-methionine + 3-phenylpyruvate + H2O. In terms of biological role, catalyzes the conversion of S-adenosyl-L-methionine (SAM) to carboxy-S-adenosyl-L-methionine (Cx-SAM). This chain is Carboxy-S-adenosyl-L-methionine synthase, found in Pseudomonas syringae pv. syringae (strain B728a).